The following is a 437-amino-acid chain: O-methyltransferase elcB (437 aa).

Aspartate 269 contacts S-adenosyl-L-methionine. Catalysis depends on histidine 319, which acts as the Proton acceptor.

The protein belongs to the class I-like SAM-binding methyltransferase superfamily. Cation-independent O-methyltransferase family. COMT subfamily.

Its pathway is secondary metabolite biosynthesis. O-methyltransferase; part of the gene cluster that mediates the biosynthesis of elsinochrome C, a perelyenequinone phytotoxin structurally similar to cercosporin. The first step of elsinochrome C biosynthesis is performed by the polyketide synthase elcA which catalyzes the formation of nor-toralactone. The starter unit acyltransferase (SAT) domain of elcA initiates polyketide extension by the selective utilization of acetyl-CoA, which is elongated to the heptaketide in the beta-ketoacyl synthase (KS) domain by successive condensations with six malonyl units introduced by the malonyl acyltransferase (MAT) domain. The product template (PT) domain catalyzes C4-C9 and C2-C11 aldol cyclizations and dehydrations to a trihydroxynaphthalene, which is thought to be delivered to the thioesterase (TE) domain for product release. The bifunctional enzyme elcB then methylates nor-toralactone to toralactone before conducting an unusual oxidative aromatic ring opening. The next step in perylenequinone biosynthesis is an O-methylation at the nascent OH-6 of the elcB product performed by the O-methyltransferase elcD. The oxidative coupling of the two monomeric naphthol units in perylenequinone biosynthesis is catalyzed by the FAD-dependent monooxygenase elcE and the multicopper oxidase elcG. ElcG might catalyze the first intermolecular coupling in a regio- and stereo-selective manner via a phenol radical coupling mechanism and the elcE could forge the second C-C bond intramolecularly via a hydride transfer mechanism. The fasciclin domain-containing protein elcF might also play a role duting this step. The last piece of the puzzle in the biosynthesis of elsinochrome C is the additional annulation by enolate coupling to afford the dihydrobenzo(ghi)perylenequinone system, catalyzed by the FAD-dependent monooxygenase elcH. The sequence is that of O-methyltransferase elcB from Phaeosphaeria nodorum (strain SN15 / ATCC MYA-4574 / FGSC 10173) (Glume blotch fungus).